The following is a 443-amino-acid chain: ATP-dependent protease ATPase subunit HslU (443 aa).

Residues Ile-18 and 60-65 (GVGKTE) each bind ATP. The interval 139 to 158 (AKNNWGQNETPAEPSSARQS) is disordered. Asp-256, Glu-321, and Arg-393 together coordinate ATP.

This sequence belongs to the ClpX chaperone family. HslU subfamily. As to quaternary structure, a double ring-shaped homohexamer of HslV is capped on each side by a ring-shaped HslU homohexamer. The assembly of the HslU/HslV complex is dependent on binding of ATP.

It localises to the cytoplasm. Its function is as follows. ATPase subunit of a proteasome-like degradation complex; this subunit has chaperone activity. The binding of ATP and its subsequent hydrolysis by HslU are essential for unfolding of protein substrates subsequently hydrolyzed by HslV. HslU recognizes the N-terminal part of its protein substrates and unfolds these before they are guided to HslV for hydrolysis. The sequence is that of ATP-dependent protease ATPase subunit HslU from Erwinia tasmaniensis (strain DSM 17950 / CFBP 7177 / CIP 109463 / NCPPB 4357 / Et1/99).